Reading from the N-terminus, the 1227-residue chain is Peroxisomal ATPase PEX1 (1227 aa).

2 disordered regions span residues 251-311 (NNKN…NKKN) and 443-480 (PPTSSSSSSPSNNLDSQRSNNNNNNINNDQLNDITNNM). Acidic residues predominate over residues 264–289 (GDEEEDDDDNEEFDDDDDDDNNNNED). Coiled-coil stretches lie at residues 282–315 (DDNNNNEDDTSKLQKQLDNKNNNNKKNKKNNKTI) and 454–519 (NNLD…NQFQ). A compositionally biased stretch (basic and acidic residues) spans 290-299 (DTSKLQKQLD). ATP is bound by residues 609–616 (GSHGSGKS) and 907–914 (GPTGCGKT). Positions 1096-1107 (KKRKRKEKEDQS) are enriched in basic and acidic residues. A disordered region spans residues 1096–1132 (KKRKRKEKEDQSNKNSSQQQDDFIIFQPKNNDNSISK). The span at 1108-1117 (NKNSSQQQDD) shows a compositional bias: low complexity. The span at 1123-1132 (PKNNDNSISK) shows a compositional bias: polar residues.

Belongs to the AAA ATPase family. In terms of assembly, interacts with PEX6; forming the PEX1-PEX6 AAA ATPase complex, which is composed of a heterohexamer formed by a trimer of PEX1-PEX6 dimers.

The protein resides in the cytoplasm. The protein localises to the cytosol. It localises to the peroxisome membrane. The enzyme catalyses ATP + H2O = ADP + phosphate + H(+). Component of the PEX1-PEX6 AAA ATPase complex, a protein dislocase complex that mediates the ATP-dependent extraction of the PEX5 receptor from peroxisomal membranes, an essential step for PEX5 recycling. Specifically recognizes PEX5 monoubiquitinated at 'Cys-11', and pulls it out of the peroxisome lumen through the PEX2-PEX10-PEX12 retrotranslocation channel. Extraction by the PEX1-PEX6 AAA ATPase complex is accompanied by unfolding of the TPR repeats and release of bound cargo from PEX5. The chain is Peroxisomal ATPase PEX1 (pex1) from Dictyostelium discoideum (Social amoeba).